Consider the following 416-residue polypeptide: Doublesex- and mab-3-related transcription factor A2 (416 aa).

The DM DNA-binding region spans 25–72 (CARCRNHGVVSALKGHKRYCRWKDCMCAKCTLIAERQRVMAAQVALRR). The span at 131-154 (FSKGQLSGPTTPQQAAGKSASAES) shows a compositional bias: polar residues. Residues 131–226 (FSKGQLSGPT…PSPSSAASRH (96 aa)) are disordered. Residues 197–207 (GSVSSIGSDSG) show a composition bias toward low complexity. A DMA domain is found at 227–262 (MNAIDILTRVFPSHKRSILELVLQGCGKDVVQAIEQ).

The protein belongs to the DMRT family.

It localises to the nucleus. Functionally, may be involved in sexual development. This chain is Doublesex- and mab-3-related transcription factor A2 (dmrta2), found in Takifugu rubripes (Japanese pufferfish).